A 180-amino-acid chain; its full sequence is Large ribosomal subunit protein uL5 (180 aa).

It belongs to the universal ribosomal protein uL5 family. Part of the 50S ribosomal subunit; part of the 5S rRNA/L5/L18/L25 subcomplex. Contacts the 5S rRNA and the P site tRNA. Forms a bridge to the 30S subunit in the 70S ribosome.

Its function is as follows. This is one of the proteins that bind and probably mediate the attachment of the 5S RNA into the large ribosomal subunit, where it forms part of the central protuberance. In the 70S ribosome it contacts protein S13 of the 30S subunit (bridge B1b), connecting the 2 subunits; this bridge is implicated in subunit movement. Contacts the P site tRNA; the 5S rRNA and some of its associated proteins might help stabilize positioning of ribosome-bound tRNAs. The sequence is that of Large ribosomal subunit protein uL5 from Xanthomonas axonopodis pv. citri (strain 306).